The following is a 361-amino-acid chain: Spermidine/putrescine import ATP-binding protein PotA (361 aa).

The 235-residue stretch at Ile-7 to Ile-241 folds into the ABC transporter domain. Gly-43–Thr-50 is a binding site for ATP.

The protein belongs to the ABC transporter superfamily. Spermidine/putrescine importer (TC 3.A.1.11.1) family. As to quaternary structure, the complex is composed of two ATP-binding proteins (PotA), two transmembrane proteins (PotB and PotC) and a solute-binding protein (PotD).

Its subcellular location is the cell inner membrane. It catalyses the reaction ATP + H2O + polyamine-[polyamine-binding protein]Side 1 = ADP + phosphate + polyamineSide 2 + [polyamine-binding protein]Side 1.. Its function is as follows. Part of the ABC transporter complex PotABCD involved in spermidine/putrescine import. Responsible for energy coupling to the transport system. The polypeptide is Spermidine/putrescine import ATP-binding protein PotA (Pseudomonas fluorescens (strain Pf0-1)).